Reading from the N-terminus, the 542-residue chain is MELSYQALRVASQNREAEELRTEARRKNLLILIMHYLLQEGYMDSANSLEQETKISLRRFDVCDNVDLETILMEYESYYYIKFQKYPKITKKALDHDSRVQSKPRSAGKLRRAGSNSTQGLPRIAQQTVLHRPVSGSYFRTHAHQKALSRENSKQENGGNSPREASEIGLNVSAISKTSGEGGQTRRRQVIDFRSMIQDTIKGASQEIALNSLNCNPDPSERLIKPVGAFIGGNSEMRELAAVISRDIYLQNPNVRWDDIIGLDAAKRLVKEAVVYPIRYPQLFTGILSPWKGLLLYGPPGTGKTLLAKAVATECNTTFFNISASTIVSKWRGDSEKLVRVLFELARYHAPSTIFLDELESVMSQRGTGPGGEHEGSRRMKTELLVQMDGLARSDDLVFVLAASNLPWELDYAMLRRLEKRILVDLPSKEARQAMIQHWLPPVSNSSGVELRTDLDYSTLGAETDGYSGSDIRLVCKEAAMRPVRKIFDALENHHSEHKNLPVISLDTVTTSDFLEVLAHTKPSAKSLAEKYAAWQKEFESV.

The 33-residue stretch at arginine 25–leucine 57 folds into the LisH domain. Disordered regions lie at residues leucine 94–glutamine 126 and histidine 142–isoleucine 168. The span at glycine 114 to glutamine 126 shows a compositional bias: polar residues. Glycine 298–threonine 305 is an ATP binding site.

It belongs to the AAA ATPase family. Katanin p60 subunit A1 subfamily. A-like 2 sub-subfamily.

The protein resides in the cytoplasm. The protein localises to the cytoskeleton. It localises to the spindle. It is found in the spindle pole. The catalysed reaction is n ATP + n H2O + a microtubule = n ADP + n phosphate + (n+1) alpha/beta tubulin heterodimers.. Its function is as follows. Severs microtubules in vitro in an ATP-dependent manner. This activity may promote rapid reorganization of cellular microtubule arrays. In Xenopus tropicalis (Western clawed frog), this protein is Katanin p60 ATPase-containing subunit A-like 2 (katnal2).